Here is a 255-residue protein sequence, read N- to C-terminus: MNTKVPIYSVSGEMKGEIDLPEVFDTEVREDIIRRAFRAISLSMRQPYGSSPLAGMRRVGHTTRPGLGISRMPRIAGGSRVVGIASAVGGKSAHSPRTTKNLYVKINDRERKMAKYSAIALTASVEAVKKRGHRFKEGLKLPIVVEDGVEGINKTKDAIALLKNLGVYEDIERSREGKHIRAGRGKMRGRRYKQPKSVLIVARNSSAMKAFRSLPGVDIASPNSLSIRKLAPGGVGGRLTIFTEGAIESLKEVDQ.

This sequence belongs to the universal ribosomal protein uL4 family. As to quaternary structure, part of the 50S ribosomal subunit.

Functionally, one of the primary rRNA binding proteins, this protein initially binds near the 5'-end of the 23S rRNA. It is important during the early stages of 50S assembly. It makes multiple contacts with different domains of the 23S rRNA in the assembled 50S subunit and ribosome. Forms part of the polypeptide exit tunnel. The protein is Large ribosomal subunit protein uL4 of Thermoplasma acidophilum (strain ATCC 25905 / DSM 1728 / JCM 9062 / NBRC 15155 / AMRC-C165).